Here is a 73-residue protein sequence, read N- to C-terminus: Aldehyde dehydrogenase (73 aa).

This sequence belongs to the aldehyde dehydrogenase family.

The catalysed reaction is an aldehyde + NAD(+) + H2O = a carboxylate + NADH + 2 H(+). It functions in the pathway alcohol metabolism; ethanol degradation; acetate from ethanol: step 2/2. The polypeptide is Aldehyde dehydrogenase (Geobacillus stearothermophilus (Bacillus stearothermophilus)).